A 1500-amino-acid chain; its full sequence is Host cell factor (1500 aa).

5 Kelch repeats span residues 85–133 (LMVV…VEGT), 135–181 (MFVF…RLGH), 189–237 (KIFL…TYGD), 259–307 (NLLI…MIGN), and 308–373 (KMYV…GIQS). The residue at position 477 (serine 477) is a Phosphoserine. Over residues 517–528 (LLQSMSQPSSPA) the composition is skewed to polar residues. The tract at residues 517–543 (LLQSMSQPSSPASRADKDPLSSGGGTT) is disordered. Phosphoserine is present on residues serine 958 and serine 966. Positions 1024-1061 (SEGQHGSEENENNGENATSSSASALFTGGDTAGPSRAQ) are disordered. Positions 1036-1047 (NGENATSSSASA) are enriched in low complexity. Threonine 1126 carries the phosphothreonine modification. The interval 1161–1185 (IGSLKENQDENKKFKQRQESSPSQN) is disordered. Residues 1166-1178 (ENQDENKKFKQRQ) are compositionally biased toward basic and acidic residues. Fibronectin type-III domains follow at residues 1244–1341 (VQST…TCLP) and 1346–1457 (APSA…DPAA). Positions 1458 to 1500 (AKQHTPTVTPNLKRGPEKSTIGSSNIANTFCSPHKRGRNGLHD) are disordered. The Bipartite nuclear localization signal signature appears at 1470–1495 (KRGPEKSTIGSSNIANTFCSPHKRGR). Residues 1477–1488 (TIGSSNIANTFC) are compositionally biased toward polar residues. Serine 1489 is modified (phosphoserine). Residues 1490 to 1500 (PHKRGRNGLHD) are compositionally biased toward basic residues.

As to quaternary structure, core component of several methyltransferase-containing complexes. Component of the SET1 complex, composed at least of the catalytic subunit Set1, wds/WDR5, Wdr82, Rbbp5, ash2, Cfp1/CXXC1, hcf and Dpy-30L1. Component of the MLL3/4 complex composed at least of the catalytic subunit trr, ash2, Rbbp5, Dpy-30L1, wds, hcf, ptip, Pa1, Utx, Lpt and Ncoa6. Component of the Ada2a-containing (ATAC) complex composed of at least Ada2a, Atac1, Hcf, Ada3, Gcn5, Mocs2B, Charac-14, Atac3, Atac2, NC2beta and wds. Post-translationally, proteolytic cleavage occurs between amino acids 900 and 1100 within the non-conserved central region, giving rise to two independent but tightly associated N- and C-terminal subunits.

It is found in the nucleus. Its function is as follows. May be involved in control of the cell cycle. The protein is Host cell factor of Drosophila melanogaster (Fruit fly).